Reading from the N-terminus, the 199-residue chain is MLKILVIDRCHFTRTGIEALLNHSGRFSSSFLVSGINNLLLAKEHILQWKPHLVIADLNSFISETHSSPPINPFFMSCGVIPLILLQSADRQHAPIAPSQSVAHSVLTKHTTLNTLSHTIQEALQVRPALEIPKNATPLLTPQEEKVLSMWMDGVSNNAIAAALSIHGKTVYTYKRNIRMKLHLGNRFSPFLSLPGKGD.

The Response regulatory domain occupies 3–124 (KILVIDRCHF…TLSHTIQEAL (122 aa)). D8 is modified (4-aspartylphosphate). Residues 133–198 (PKNATPLLTP…SPFLSLPGKG (66 aa)) form the HTH luxR-type domain. Residues 157-176 (NNAIAAALSIHGKTVYTYKR) constitute a DNA-binding region (H-T-H motif).

May serve to repress the entericidin locus in C.freundii. The protein is Transcriptional regulatory protein EntR (ecnR) of Citrobacter freundii.